The sequence spans 442 residues: 3-isopropylmalate dehydratase large subunit (442 aa).

Residues Xaa-347, Cys-407, and Cys-410 each contribute to the [4Fe-4S] cluster site.

The protein belongs to the aconitase/IPM isomerase family. LeuC type 1 subfamily. Heterodimer of LeuC and LeuD. It depends on [4Fe-4S] cluster as a cofactor.

It catalyses the reaction (2R,3S)-3-isopropylmalate = (2S)-2-isopropylmalate. Its pathway is amino-acid biosynthesis; L-leucine biosynthesis; L-leucine from 3-methyl-2-oxobutanoate: step 2/4. Catalyzes the isomerization between 2-isopropylmalate and 3-isopropylmalate, via the formation of 2-isopropylmaleate. This chain is 3-isopropylmalate dehydratase large subunit, found in Buchnera aphidicola subsp. Macrosiphoniella ludovicianae.